The sequence spans 333 residues: Ferredoxin--NADP reductase (333 aa).

The FAD site is built by Asp-32, Gln-40, Tyr-45, Ala-85, Phe-119, Asp-285, and Thr-326.

The protein belongs to the ferredoxin--NADP reductase type 2 family. Homodimer. The cofactor is FAD.

It catalyses the reaction 2 reduced [2Fe-2S]-[ferredoxin] + NADP(+) + H(+) = 2 oxidized [2Fe-2S]-[ferredoxin] + NADPH. The sequence is that of Ferredoxin--NADP reductase from Neorickettsia sennetsu (strain ATCC VR-367 / Miyayama) (Ehrlichia sennetsu).